The primary structure comprises 456 residues: Bifunctional protein GlmU (456 aa).

Positions 1-229 (MTKKALSAVI…VMEVEGANNR (229 aa)) are pyrophosphorylase. UDP-N-acetyl-alpha-D-glucosamine contacts are provided by residues 11–14 (LAAG), Lys25, Gln76, 81–82 (GT), 103–105 (YGD), Gly140, Glu154, Asn169, and Asn227. Asp105 contributes to the Mg(2+) binding site. Asn227 serves as a coordination point for Mg(2+). Positions 230–250 (LQLAALERYLQNKQASKLLLE) are linker. Residues 251-456 (GVMIYDPARF…QGWQRPIKKK (206 aa)) are N-acetyltransferase. Residues Arg333 and Lys351 each coordinate UDP-N-acetyl-alpha-D-glucosamine. Residue His363 is the Proton acceptor of the active site. UDP-N-acetyl-alpha-D-glucosamine-binding residues include Tyr366 and Asn377. Acetyl-CoA is bound by residues Ala380, 386 to 387 (NY), Ser405, Ala423, and Arg440.

It in the N-terminal section; belongs to the N-acetylglucosamine-1-phosphate uridyltransferase family. In the C-terminal section; belongs to the transferase hexapeptide repeat family. Homotrimer. Mg(2+) serves as cofactor.

The protein resides in the cytoplasm. The catalysed reaction is alpha-D-glucosamine 1-phosphate + acetyl-CoA = N-acetyl-alpha-D-glucosamine 1-phosphate + CoA + H(+). It carries out the reaction N-acetyl-alpha-D-glucosamine 1-phosphate + UTP + H(+) = UDP-N-acetyl-alpha-D-glucosamine + diphosphate. It functions in the pathway nucleotide-sugar biosynthesis; UDP-N-acetyl-alpha-D-glucosamine biosynthesis; N-acetyl-alpha-D-glucosamine 1-phosphate from alpha-D-glucosamine 6-phosphate (route II): step 2/2. It participates in nucleotide-sugar biosynthesis; UDP-N-acetyl-alpha-D-glucosamine biosynthesis; UDP-N-acetyl-alpha-D-glucosamine from N-acetyl-alpha-D-glucosamine 1-phosphate: step 1/1. The protein operates within bacterial outer membrane biogenesis; LPS lipid A biosynthesis. Catalyzes the last two sequential reactions in the de novo biosynthetic pathway for UDP-N-acetylglucosamine (UDP-GlcNAc). The C-terminal domain catalyzes the transfer of acetyl group from acetyl coenzyme A to glucosamine-1-phosphate (GlcN-1-P) to produce N-acetylglucosamine-1-phosphate (GlcNAc-1-P), which is converted into UDP-GlcNAc by the transfer of uridine 5-monophosphate (from uridine 5-triphosphate), a reaction catalyzed by the N-terminal domain. This Haemophilus influenzae (strain PittGG) protein is Bifunctional protein GlmU.